The primary structure comprises 149 residues: Large ribosomal subunit protein uL30 (149 aa).

Belongs to the universal ribosomal protein uL30 family. Part of the 50S ribosomal subunit.

In Methanopyrus kandleri (strain AV19 / DSM 6324 / JCM 9639 / NBRC 100938), this protein is Large ribosomal subunit protein uL30.